A 168-amino-acid polypeptide reads, in one-letter code: Phosphopantetheine adenylyltransferase (168 aa).

Thr-9 provides a ligand contact to substrate. ATP is bound by residues 9 to 10 (TF) and His-17. Substrate-binding residues include Lys-41, Leu-74, and Arg-88. Residues 89–91 (GLR), Glu-99, and 124–130 (LQPIASR) contribute to the ATP site.

It belongs to the bacterial CoaD family. As to quaternary structure, homohexamer. Mg(2+) is required as a cofactor.

The protein localises to the cytoplasm. The catalysed reaction is (R)-4'-phosphopantetheine + ATP + H(+) = 3'-dephospho-CoA + diphosphate. It participates in cofactor biosynthesis; coenzyme A biosynthesis; CoA from (R)-pantothenate: step 4/5. Reversibly transfers an adenylyl group from ATP to 4'-phosphopantetheine, yielding dephospho-CoA (dPCoA) and pyrophosphate. The protein is Phosphopantetheine adenylyltransferase of Sphingopyxis alaskensis (strain DSM 13593 / LMG 18877 / RB2256) (Sphingomonas alaskensis).